A 398-amino-acid polypeptide reads, in one-letter code: Acetate kinase (398 aa).

N7 serves as a coordination point for Mg(2+). K14 is an ATP binding site. Position 91 (R91) interacts with substrate. The active-site Proton donor/acceptor is D148. ATP contacts are provided by residues 208–212 (HLGNG), 282–284 (DFR), and 330–334 (GVGEN). E383 provides a ligand contact to Mg(2+).

It belongs to the acetokinase family. In terms of assembly, homodimer. Mg(2+) serves as cofactor. Mn(2+) is required as a cofactor.

Its subcellular location is the cytoplasm. It catalyses the reaction acetate + ATP = acetyl phosphate + ADP. Its pathway is metabolic intermediate biosynthesis; acetyl-CoA biosynthesis; acetyl-CoA from acetate: step 1/2. Its function is as follows. Catalyzes the formation of acetyl phosphate from acetate and ATP. Can also catalyze the reverse reaction. This chain is Acetate kinase, found in Carboxydothermus hydrogenoformans (strain ATCC BAA-161 / DSM 6008 / Z-2901).